The chain runs to 504 residues: L-carnitine/gamma-butyrobetaine antiporter (504 aa).

Helical transmembrane passes span 10 to 30 (IEPK…WLTV), 51 to 71 (WGWA…WLVF), 92 to 112 (IFMM…SIEI), 143 to 163 (GPLP…FFFV), 195 to 215 (FYLV…TPLV), 231 to 251 (LDAI…ACGL), 263 to 283 (SYLS…SFIM), 316 to 336 (WTVF…IFLA), 347 to 367 (LCFG…TVLG), 403 to 423 (LSTA…VTLI), 446 to 466 (LLVR…LLAL), and 475 to 495 (AIIA…LSFI).

This sequence belongs to the BCCT transporter (TC 2.A.15) family. CaiT subfamily. Homotrimer.

It localises to the cell inner membrane. It catalyses the reaction 4-(trimethylamino)butanoate(in) + (R)-carnitine(out) = 4-(trimethylamino)butanoate(out) + (R)-carnitine(in). Its pathway is amine and polyamine metabolism; carnitine metabolism. Its function is as follows. Catalyzes the exchange of L-carnitine for gamma-butyrobetaine. The sequence is that of L-carnitine/gamma-butyrobetaine antiporter from Escherichia fergusonii (strain ATCC 35469 / DSM 13698 / CCUG 18766 / IAM 14443 / JCM 21226 / LMG 7866 / NBRC 102419 / NCTC 12128 / CDC 0568-73).